The chain runs to 326 residues: DnaJ homolog subfamily B member 6 (326 aa).

The J domain occupies Val-2–Gly-69. The interaction with HSP70 stretch occupies residues Val-2–Gly-146. An interaction with KRT18 region spans residues Phe-119–Arg-242. At Arg-135 the chain carries Omega-N-methylarginine. The segment at Ala-249–His-326 is disordered. Ser-277 carries the phosphoserine modification.

In terms of assembly, homooligomer. Interacts with BAG3, HSPB8 and STUB1. Interacts with ALKBH1. Interacts with HSP70, KRT18 and PTTG.

Its subcellular location is the cytoplasm. It localises to the perinuclear region. It is found in the nucleus. The protein localises to the myofibril. The protein resides in the sarcomere. Its subcellular location is the z line. Functionally, has a stimulatory effect on the ATPase activity of HSP70 in a dose-dependent and time-dependent manner and hence acts as a co-chaperone of HSP70. Plays an indispensable role in the organization of KRT8/KRT18 filaments. Acts as an endogenous molecular chaperone for neuronal proteins including huntingtin. Suppresses aggregation and toxicity of polyglutamine-containing, aggregation-prone proteins. Also reduces cellular toxicity and caspase-3 activity. The polypeptide is DnaJ homolog subfamily B member 6 (DNAJB6) (Pongo abelii (Sumatran orangutan)).